A 492-amino-acid chain; its full sequence is Bifunctional purine biosynthesis protein PurH (492 aa).

Residues 1 to 144 form the MGS-like domain; it reads MKKAILSVSN…KNYKHVTTIV (144 aa).

The protein belongs to the PurH family.

The catalysed reaction is (6R)-10-formyltetrahydrofolate + 5-amino-1-(5-phospho-beta-D-ribosyl)imidazole-4-carboxamide = 5-formamido-1-(5-phospho-D-ribosyl)imidazole-4-carboxamide + (6S)-5,6,7,8-tetrahydrofolate. It carries out the reaction IMP + H2O = 5-formamido-1-(5-phospho-D-ribosyl)imidazole-4-carboxamide. Its pathway is purine metabolism; IMP biosynthesis via de novo pathway; 5-formamido-1-(5-phospho-D-ribosyl)imidazole-4-carboxamide from 5-amino-1-(5-phospho-D-ribosyl)imidazole-4-carboxamide (10-formyl THF route): step 1/1. It participates in purine metabolism; IMP biosynthesis via de novo pathway; IMP from 5-formamido-1-(5-phospho-D-ribosyl)imidazole-4-carboxamide: step 1/1. The polypeptide is Bifunctional purine biosynthesis protein PurH (Staphylococcus aureus (strain MRSA252)).